Consider the following 482-residue polypeptide: Ubiquitin carboxyl-terminal hydrolase MINDY-1 (482 aa).

Residues 1–119 (MEQPQAECPA…RPQQLPQSPR (119 aa)) are disordered. Residues 21-66 (ESEKHEALSGPEKHPQDKDGADAAPEKHPQDKDGADAHGEAGKQKS) are compositionally biased toward basic and acidic residues. The segment covering 82-94 (CPPPEASSSPPGP) has biased composition (pro residues). Residues 106–119 (EACSRPQQLPQSPR) show a composition bias toward polar residues. Serine 117 bears the Phosphoserine mark. Cysteine 151 acts as the Nucleophile in catalysis. Histidine 333 functions as the Proton acceptor in the catalytic mechanism. The segment at 402-441 (QVDQDYLIALSLQQQQQPQGMLGLSDLELAQQLQQEEYQQ) is ubiquitin-binding domain (UBD). Over residues 437–446 (EEYQQQQAVQ) the composition is skewed to low complexity. The interval 437–482 (EEYQQQQAVQPVRTRAPSSPGRGATSGRPAGERRQRSKTESDCVLL) is disordered. The residue at position 454 (serine 454) is a Phosphoserine. The segment covering 466 to 482 (AGERRQRSKTESDCVLL) has biased composition (basic and acidic residues).

The protein belongs to the MINDY deubiquitinase family. FAM63 subfamily.

It catalyses the reaction Thiol-dependent hydrolysis of ester, thioester, amide, peptide and isopeptide bonds formed by the C-terminal Gly of ubiquitin (a 76-residue protein attached to proteins as an intracellular targeting signal).. Functionally, hydrolase that can specifically remove 'Lys-48'-linked conjugated ubiquitin from proteins. Has exodeubiquitinase activity and has a preference for long polyubiquitin chains. May play a regulatory role at the level of protein turnover. The sequence is that of Ubiquitin carboxyl-terminal hydrolase MINDY-1 (Mindy1) from Rattus norvegicus (Rat).